Consider the following 354-residue polypeptide: FAD synthetase 1, chloroplastic (354 aa).

The transit peptide at 1 to 75 (MLCGGSRASV…SQGDDHPELS (75 aa)) directs the protein to the chloroplast. Residues 228-248 (SVNTEEEDSKSKERGQVSSTR) form a disordered region.

Mg(2+) is required as a cofactor.

The protein resides in the plastid. It is found in the chloroplast. The catalysed reaction is FMN + ATP + H(+) = FAD + diphosphate. It functions in the pathway cofactor biosynthesis; FAD biosynthesis; FAD from FMN: step 1/1. Functionally, catalyzes the adenylation of flavin mononucleotide (FMN) to form flavin adenine dinucleotide (FAD) coenzyme. The polypeptide is FAD synthetase 1, chloroplastic (Arabidopsis thaliana (Mouse-ear cress)).